A 143-amino-acid chain; its full sequence is Ribosome maturation factor RimP (143 aa).

Belongs to the RimP family.

It is found in the cytoplasm. Functionally, required for maturation of 30S ribosomal subunits. The sequence is that of Ribosome maturation factor RimP from Borrelia recurrentis (strain A1).